The primary structure comprises 94 residues: Acylphosphatase (94 aa).

The Acylphosphatase-like domain occupies 3 to 90 (RVHVIVEGRV…SDEKQFRIMY (88 aa)). Residues arginine 18 and asparagine 36 contribute to the active site.

Belongs to the acylphosphatase family.

It carries out the reaction an acyl phosphate + H2O = a carboxylate + phosphate + H(+). The chain is Acylphosphatase (acyP) from Geobacillus kaustophilus (strain HTA426).